Consider the following 418-residue polypeptide: MVSSQPVPFDDGGKRRKKKRKTRAMESFTGKFADLYRLTDELLGEGAYAKVQGCVSLQNGKDYAVKIVEKKAGHSRSRVFREVETLYQCQGNKNILELIEFCEDDARFYLVFEKLLGGSILSHIQKRKHFNEREASKVVKDIASALDFLHTKGIAHRDLKPENILCEFKDKVSPVKICDFDLGSGVKLNSACTTITTPELTTPCGSAEYMAPEVVEVFTEEATFYDKRCDLWSLGVILYIMLSGYPPFVGNCGTDCGWDRGEVCRVCQNKLFESIQEGKYEFPEKDWSHISISAKDLISKLLVRDAKERLSAFQVLQHPWLQGDAPERGLPTPLVLQRNSSTKDLTIFAAEAIAFNRQLSQHDNDLNEEDESFIHAVCSMRLSPPSKSRLAKRRAQAHARKGGSHPTHSTVTASQGTP.

The tract at residues 1-23 (MVSSQPVPFDDGGKRRKKKRKTR) is disordered. The region spanning 37-321 (RLTDELLGEG…AFQVLQHPWL (285 aa)) is the Protein kinase domain. ATP contacts are provided by residues 43-51 (LGEGAYAKV) and K66. The Proton acceptor role is filled by D158. The tract at residues 384-418 (PPSKSRLAKRRAQAHARKGGSHPTHSTVTASQGTP) is disordered. Positions 389 to 403 (RLAKRRAQAHARKGG) are enriched in basic residues. Residues 406–418 (PTHSTVTASQGTP) are compositionally biased toward polar residues.

It belongs to the protein kinase superfamily. CAMK Ser/Thr protein kinase family. Mg(2+) serves as cofactor.

It catalyses the reaction L-seryl-[protein] + ATP = O-phospho-L-seryl-[protein] + ADP + H(+). The catalysed reaction is L-threonyl-[protein] + ATP = O-phospho-L-threonyl-[protein] + ADP + H(+). In terms of biological role, may play a role in the response to environmental stress and cytokines. Appears to regulate translation by phosphorylating EIF4E, thus increasing the affinity of this protein for the 7-methylguanosine-containing mRNA cap. In Xenopus laevis (African clawed frog), this protein is MAP kinase-interacting serine/threonine-protein kinase 1 (mknk1).